The following is a 229-amino-acid chain: MTVRRRGFMAWTWFITWRFLLVVVLLLLVLLLVLRFVPPPTTSFMLQSAYPVSQHWVSIDELPSHLPLAVVASEDQLFPKHFGIDFTSITKALNQYDDGQGLRGASTITQQTAKNLLLWPGRNLVRKGLEAMLAVSLEAVWGKKRILEVYLNVAEFGKGIYGVEAASRHYFNKSARYLSINEAARLAVLLPSPRSRSPHHLTPYLHQRVAWGEKQMRQLGSGYLKTILN.

Residues 14-34 (FITWRFLLVVVLLLLVLLLVL) form a helical membrane-spanning segment.

Belongs to the glycosyltransferase 51 family.

The protein resides in the cell inner membrane. It catalyses the reaction [GlcNAc-(1-&gt;4)-Mur2Ac(oyl-L-Ala-gamma-D-Glu-L-Lys-D-Ala-D-Ala)](n)-di-trans,octa-cis-undecaprenyl diphosphate + beta-D-GlcNAc-(1-&gt;4)-Mur2Ac(oyl-L-Ala-gamma-D-Glu-L-Lys-D-Ala-D-Ala)-di-trans,octa-cis-undecaprenyl diphosphate = [GlcNAc-(1-&gt;4)-Mur2Ac(oyl-L-Ala-gamma-D-Glu-L-Lys-D-Ala-D-Ala)](n+1)-di-trans,octa-cis-undecaprenyl diphosphate + di-trans,octa-cis-undecaprenyl diphosphate + H(+). It participates in cell wall biogenesis; peptidoglycan biosynthesis. Peptidoglycan polymerase that catalyzes glycan chain elongation from lipid-linked precursors. The chain is Biosynthetic peptidoglycan transglycosylase from Shewanella denitrificans (strain OS217 / ATCC BAA-1090 / DSM 15013).